Consider the following 514-residue polypeptide: ATP synthase subunit alpha (514 aa).

Residue 169–176 (GDRQTGKT) coordinates ATP.

It belongs to the ATPase alpha/beta chains family. F-type ATPases have 2 components, CF(1) - the catalytic core - and CF(0) - the membrane proton channel. CF(1) has five subunits: alpha(3), beta(3), gamma(1), delta(1), epsilon(1). CF(0) has three main subunits: a(1), b(2) and c(9-12). The alpha and beta chains form an alternating ring which encloses part of the gamma chain. CF(1) is attached to CF(0) by a central stalk formed by the gamma and epsilon chains, while a peripheral stalk is formed by the delta and b chains.

It localises to the cell membrane. The catalysed reaction is ATP + H2O + 4 H(+)(in) = ADP + phosphate + 5 H(+)(out). In terms of biological role, produces ATP from ADP in the presence of a proton gradient across the membrane. The alpha chain is a regulatory subunit. This chain is ATP synthase subunit alpha, found in Buchnera aphidicola subsp. Baizongia pistaciae (strain Bp).